Consider the following 283-residue polypeptide: Protein/nucleic acid deglycase HchA (283 aa).

Residues His86, Glu91, and His123 each contribute to the Zn(2+) site. Cys185 functions as the Nucleophile in the catalytic mechanism.

The protein belongs to the peptidase C56 family. HchA subfamily. As to quaternary structure, homodimer.

Its subcellular location is the cytoplasm. It carries out the reaction N(omega)-(1-hydroxy-2-oxopropyl)-L-arginyl-[protein] + H2O = lactate + L-arginyl-[protein] + H(+). It catalyses the reaction N(6)-(1-hydroxy-2-oxopropyl)-L-lysyl-[protein] + H2O = lactate + L-lysyl-[protein] + H(+). The catalysed reaction is S-(1-hydroxy-2-oxopropyl)-L-cysteinyl-[protein] + H2O = lactate + L-cysteinyl-[protein] + H(+). The enzyme catalyses N(omega)-(1-hydroxy-2-oxoethyl)-L-arginyl-[protein] + H2O = L-arginyl-[protein] + glycolate + H(+). It carries out the reaction N(6)-(1-hydroxy-2-oxoethyl)-L-lysyl-[protein] + H2O = glycolate + L-lysyl-[protein] + H(+). It catalyses the reaction S-(1-hydroxy-2-oxoethyl)-L-cysteinyl-[protein] + H2O = glycolate + L-cysteinyl-[protein] + H(+). The catalysed reaction is N(2)-(1-hydroxy-2-oxopropyl)-dGTP + H2O = lactate + dGTP + H(+). The enzyme catalyses N(2)-(1-hydroxy-2-oxopropyl)-GTP + H2O = lactate + GTP + H(+). It carries out the reaction N(2)-(1-hydroxy-2-oxopropyl)-GDP + H2O = lactate + GDP + H(+). It catalyses the reaction N(2)-(1-hydroxy-2-oxopropyl)-GMP + H2O = lactate + GMP + H(+). The catalysed reaction is N(2)-(1-hydroxy-2-oxoethyl)-dGTP + H2O = dGTP + glycolate + H(+). The enzyme catalyses N(2)-(1-hydroxy-2-oxoethyl)-GTP + H2O = glycolate + GTP + H(+). It carries out the reaction N(2)-(1-hydroxy-2-oxoethyl)-GDP + H2O = glycolate + GDP + H(+). It catalyses the reaction N(2)-(1-hydroxy-2-oxoethyl)-GMP + H2O = glycolate + GMP + H(+). The catalysed reaction is an N(2)-(1-hydroxy-2-oxopropyl)-guanosine in RNA + H2O = a guanosine in RNA + lactate + H(+). The enzyme catalyses an N(2)-(1-hydroxy-2-oxopropyl)-2'-deoxyguanosine in DNA + H2O = a 2'-deoxyguanosine in DNA + lactate + H(+). It carries out the reaction an N(2)-(1-hydroxy-2-oxoethyl)-guanosine in RNA + H2O = a guanosine in RNA + glycolate + H(+). It catalyses the reaction an N(2)-(1-hydroxy-2-oxoethyl)-2'-deoxyguanosine in DNA + H2O = a 2'-deoxyguanosine in DNA + glycolate + H(+). Its function is as follows. Protein and nucleotide deglycase that catalyzes the deglycation of the Maillard adducts formed between amino groups of proteins or nucleotides and reactive carbonyl groups of glyoxals. Thus, functions as a protein deglycase that repairs methylglyoxal- and glyoxal-glycated proteins, and releases repaired proteins and lactate or glycolate, respectively. Deglycates cysteine, arginine and lysine residues in proteins, and thus reactivates these proteins by reversing glycation by glyoxals. Acts on early glycation intermediates (hemithioacetals and aminocarbinols), preventing the formation of Schiff bases and advanced glycation endproducts (AGE). Also functions as a nucleotide deglycase able to repair glycated guanine in the free nucleotide pool (GTP, GDP, GMP, dGTP) and in DNA and RNA. Is thus involved in a major nucleotide repair system named guanine glycation repair (GG repair), dedicated to reversing methylglyoxal and glyoxal damage via nucleotide sanitization and direct nucleic acid repair. Plays an important role in protecting cells from carbonyl stress. This is Protein/nucleic acid deglycase HchA from Escherichia coli O45:K1 (strain S88 / ExPEC).